Reading from the N-terminus, the 406-residue chain is MKDHYDVIVVGAGPGGSIAAKTAAKEGLDVLMIEKRQEIGDPIRCAEGVGKFHLKQHIEPDPRWICADVKGSYIISPDGTRIEMAEEMSGGEVGYVLERKIFDRALANESALAGAEVRVKTRATDLIIENDTVCGIKLMHLGKEYEVRSKIVIGADGVESKVGRWAGIETSVKPSDIETCAQYLVSNANIDQEFCYFYLGNEIAPAGYVWMFPKGGNKANVGIGILGSRAGKDKPIELLNDFIEKNMPDAKIIEMVIGGVPVCGTIERTIANGLMLVGDAARQSDPITGGGIINAMDAGKIAGEIAAKAIRKGDCSIDTLQEYEDLWRATIGKEINNSLIVKDTFINFTDEDLNSLAYSLRDINFTSMSLINLLKALFKANKKLLWDLRGIFKDVIKGEIDFKYKA.

Residues Gly15, Glu34, Cys45, Ala46, Gly48, Arg99, Ala123, Asp279, Gly291, and Ile292 each contribute to the FAD site.

This sequence belongs to the geranylgeranyl reductase family. DGGGPL reductase subfamily. FAD serves as cofactor.

It catalyses the reaction a 2,3-bis-O-phytanyl-sn-glycerol 1-phospholipid + 8 oxidized 2[4Fe-4S]-[ferredoxin] = a 2,3-bis-O-(geranylgeranyl)-sn-glycerol 1-phospholipid + 8 reduced 2[4Fe-4S]-[ferredoxin] + 16 H(+). The catalysed reaction is 2,3-bis-O-(phytanyl)-sn-glycerol 1-phosphate + 8 oxidized 2[4Fe-4S]-[ferredoxin] = 2,3-bis-O-(geranylgeranyl)-sn-glycerol 1-phosphate + 8 reduced 2[4Fe-4S]-[ferredoxin] + 16 H(+). The enzyme catalyses a 2,3-bis-O-phytanyl-sn-glycerol 1-phospholipid + 8 A = a 2,3-bis-O-(geranylgeranyl)-sn-glycerol 1-phospholipid + 8 AH2. It carries out the reaction CDP-2,3-bis-O-(geranylgeranyl)-sn-glycerol + 8 AH2 = CDP-2,3-bis-O-(phytanyl)-sn-glycerol + 8 A. It catalyses the reaction archaetidylserine + 8 AH2 = 2,3-bis-O-phytanyl-sn-glycero-3-phospho-L-serine + 8 A. Its pathway is membrane lipid metabolism; glycerophospholipid metabolism. Is involved in the reduction of 2,3-digeranylgeranylglycerophospholipids (unsaturated archaeols) into 2,3-diphytanylglycerophospholipids (saturated archaeols) in the biosynthesis of archaeal membrane lipids. Catalyzes the formation of archaetidic acid (2,3-di-O-phytanyl-sn-glyceryl phosphate) from 2,3-di-O-geranylgeranylglyceryl phosphate (DGGGP) via the hydrogenation of each double bond of the isoprenoid chains. Is also probably able to reduce double bonds of geranyl groups in CDP-2,3-bis-O-(geranylgeranyl)-sn-glycerol and archaetidylserine, thus acting at various stages in the biosynthesis of archaeal membrane lipids. This chain is Digeranylgeranylglycerophospholipid reductase 2, found in Methanococcoides burtonii (strain DSM 6242 / NBRC 107633 / OCM 468 / ACE-M).